We begin with the raw amino-acid sequence, 196 residues long: ECF RNA polymerase sigma factor SigK (196 aa).

Positions 39 to 105 (YDQTRARVYG…RAVDRVRSEQ (67 aa)) are sigma-70 factor domain-2. Positions 62–65 (ETTQ) match the Polymerase core binding motif. A sigma-70 factor domain-4 region spans residues 142-191 (CLDSLTDVQRECIQLAYYDGLTYAQVADRLAANLATIKSRMRDGIRALRK). A DNA-binding region (H-T-H motif) is located at residues 164-183 (YAQVADRLAANLATIKSRMR).

Belongs to the sigma-70 factor family. ECF subfamily. As to quaternary structure, interacts transiently with the RNA polymerase catalytic core formed by RpoA, RpoB, RpoC and RpoZ (2 alpha, 1 beta, 1 beta' and 1 omega subunit) to form the RNA polymerase holoenzyme that can initiate transcription. Interacts (via sigma-70 factor domain 4) with anti-sigma-K factor RskA.

In terms of biological role, sigma factors are initiation factors that promote the attachment of RNA polymerase to specific initiation sites and are then released. Extracytoplasmic function (ECF) sigma factors are held in an inactive form by an anti-sigma factor until released by regulated intramembrane proteolysis. The sequence is that of ECF RNA polymerase sigma factor SigK (sigK) from Mycolicibacterium vanbaalenii (strain DSM 7251 / JCM 13017 / BCRC 16820 / KCTC 9966 / NRRL B-24157 / PYR-1) (Mycobacterium vanbaalenii).